Here is a 92-residue protein sequence, read N- to C-terminus: Small ribosomal subunit protein uS19 (92 aa).

This sequence belongs to the universal ribosomal protein uS19 family.

Functionally, protein S19 forms a complex with S13 that binds strongly to the 16S ribosomal RNA. The polypeptide is Small ribosomal subunit protein uS19 (Bacillus mycoides (strain KBAB4) (Bacillus weihenstephanensis)).